Consider the following 591-residue polypeptide: Metalloendopeptidase OPG085 (591 aa).

His41 lines the Zn(2+) pocket. The active site involves Glu44. Residue His45 coordinates Zn(2+).

The protein belongs to the peptidase M44 family. It depends on Zn(2+) as a cofactor. Undergoes proteolytic processing during the course of infection. May be cleaved into 46 kDa and 22 kDa products (Potential).

Its subcellular location is the virion. Probably involved in maturation of some viral proteins by processing them preferentially at Ala-Gly-|-Ser/Thr/Lys motifs. Does not seem to be responsible for the cleavage of major core proteins. In Homo sapiens (Human), this protein is Metalloendopeptidase OPG085 (OPG085).